A 447-amino-acid polypeptide reads, in one-letter code: Glutamyl-tRNA(Gln) amidotransferase subunit A (447 aa).

Catalysis depends on charge relay system residues lysine 51 and serine 126. Serine 150 acts as the Acyl-ester intermediate in catalysis.

This sequence belongs to the amidase family. GatA subfamily. Heterotrimer of A, B and C subunits.

The enzyme catalyses L-glutamyl-tRNA(Gln) + L-glutamine + ATP + H2O = L-glutaminyl-tRNA(Gln) + L-glutamate + ADP + phosphate + H(+). Its function is as follows. Allows the formation of correctly charged Gln-tRNA(Gln) through the transamidation of misacylated Glu-tRNA(Gln) in organisms which lack glutaminyl-tRNA synthetase. The reaction takes place in the presence of glutamine and ATP through an activated gamma-phospho-Glu-tRNA(Gln). The chain is Glutamyl-tRNA(Gln) amidotransferase subunit A from Helicobacter hepaticus (strain ATCC 51449 / 3B1).